The chain runs to 421 residues: Serine--tRNA ligase (421 aa).

Residue 225 to 227 participates in L-serine binding; that stretch reads TAE. ATP-binding positions include 256–258 and valine 272; that span reads RSE. Residue glutamate 279 participates in L-serine binding. 345-348 provides a ligand contact to ATP; that stretch reads ETHS. Threonine 380 contacts L-serine.

The protein belongs to the class-II aminoacyl-tRNA synthetase family. Type-1 seryl-tRNA synthetase subfamily. In terms of assembly, homodimer. A single tRNA molecule binds across the dimer.

The protein localises to the cytoplasm. It carries out the reaction tRNA(Ser) + L-serine + ATP = L-seryl-tRNA(Ser) + AMP + diphosphate + H(+). The enzyme catalyses tRNA(Sec) + L-serine + ATP = L-seryl-tRNA(Sec) + AMP + diphosphate + H(+). It functions in the pathway aminoacyl-tRNA biosynthesis; selenocysteinyl-tRNA(Sec) biosynthesis; L-seryl-tRNA(Sec) from L-serine and tRNA(Sec): step 1/1. Its function is as follows. Catalyzes the attachment of serine to tRNA(Ser). Is also probably able to aminoacylate tRNA(Sec) with serine, to form the misacylated tRNA L-seryl-tRNA(Sec), which will be further converted into selenocysteinyl-tRNA(Sec). The protein is Serine--tRNA ligase (serS) of Thermus thermophilus (strain ATCC BAA-163 / DSM 7039 / HB27).